Consider the following 184-residue polypeptide: Probable chemoreceptor glutamine deamidase CheD (184 aa).

The protein belongs to the CheD family.

The enzyme catalyses L-glutaminyl-[protein] + H2O = L-glutamyl-[protein] + NH4(+). Its function is as follows. Probably deamidates glutamine residues to glutamate on methyl-accepting chemotaxis receptors (MCPs), playing an important role in chemotaxis. The chain is Probable chemoreceptor glutamine deamidase CheD from Rhizobium johnstonii (strain DSM 114642 / LMG 32736 / 3841) (Rhizobium leguminosarum bv. viciae).